The primary structure comprises 432 residues: Neuropeptide FF receptor 1 (432 aa).

The Extracellular portion of the chain corresponds to 1–43 (MEAEPSQPPNGSWPLGQNGSDVETSMATSLTFSSYYQHSSPVA). N-linked (GlcNAc...) asparagine glycosylation is found at asparagine 10 and asparagine 18. Residues 44 to 64 (AMFIAAYVLIFLLCMVGNTLV) traverse the membrane as a helical segment. At 65 to 80 (CFIVLKNRHMRTVTNM) the chain is on the cytoplasmic side. Residues 81-101 (FILNLAVSDLLVGIFCMPTTL) traverse the membrane as a helical segment. The Extracellular portion of the chain corresponds to 102–117 (VDNLITGWPFDNATCK). An N-linked (GlcNAc...) asparagine glycan is attached at asparagine 113. Cysteine 116 and cysteine 203 are oxidised to a cystine. The chain crosses the membrane as a helical span at residues 118–138 (MSGLVQGMSVSASVFTLVAIA). Topologically, residues 139–158 (VERFRCIVHPFREKLTLRKA) are cytoplasmic. A helical transmembrane segment spans residues 159 to 179 (LFTIAVIWALALLIMCPSAVT). At 180–214 (LTVTREEHHFMLDARNRSYPLYSCWEAWPEKGMRK) the chain is on the extracellular side. N-linked (GlcNAc...) asparagine glycosylation occurs at asparagine 195. Residues 215-235 (VYTAVLFAHIYLVPLALIVVM) traverse the membrane as a helical segment. At 236–273 (YVRIARKLCQAPGPARDTEEAVAEGGRTSRRRARVVHM) the chain is on the cytoplasmic side. A helical membrane pass occupies residues 274-294 (LVMVALFFTLSWLPLWVLLLL). At 295-309 (IDYGELSELQLHLLS) the chain is on the extracellular side. The helical transmembrane segment at 310-330 (VYAFPLAHWLAFFHSSANPII) threads the bilayer. At 331–432 (YGYFNENFRR…MPLTIPAWNI (102 aa)) the chain is on the cytoplasmic side. A compositionally biased stretch (low complexity) spans 380–406 (PSDSGLPSESGPSSGVPGPGRLPLRNG). Positions 380–422 (PSDSGLPSESGPSSGVPGPGRLPLRNGRVAHQDGPGEGPGCNH) are disordered.

Belongs to the G-protein coupled receptor 1 family. In terms of tissue distribution, expressed at high levels in the hypothalamus. Moderate levels found in the midbrain, thalamus, medulla oblongata, testis, eye, whole brain, cerebral cortex, striatum, hippocampus, cerebellum, optic nerve, placenta, spinal cord, pituitary gland and ovary.

The protein localises to the cell membrane. Functionally, receptor for NPAF (A-18-F-amide) and NPFF (F-8-F-amide) neuropeptides, also known as morphine-modulating peptides. Can also be activated by a variety of naturally occurring or synthetic FMRF-amide like ligands. This receptor mediates its action by association with G proteins that activate a phosphatidylinositol-calcium second messenger system. The chain is Neuropeptide FF receptor 1 (Npffr1) from Rattus norvegicus (Rat).